The primary structure comprises 791 residues: Transient receptor potential cation channel subfamily V member 3 (791 aa).

3 disordered regions span residues 1–37 (MNAHSKEMAPLMGKRTTAPGGNPVVLTEKRPADLTPT), 52–71 (PNPTVTKTSPPIFSKPMDSN), and 76–113 (LSGNCDDMDSPQSPQDDVTETPSNPNSPSANLAKEEQR). Topologically, residues 1-430 (MNAHSKEMAP…TLEPLHTLLH (430 aa)) are cytoplasmic. Positions 95–105 (ETPSNPNSPSA) are enriched in polar residues. ANK repeat units lie at residues 117 to 148 (KRLKKRIFAAVSEGCVEELRELLQDLQDLCRR), 170 to 198 (TCLMKALLNINPNTKEIVRILLAFAEEND), 214 to 243 (EGQTALNIAIERRQGDITAVLIAAGADVNA), 261 to 291 (FGETPLALAACTNQPEIVQLLMENEQTDITS), 298 to 330 (NILHALVTVAEDFKTQNDFVKRMYDMILLRSGN), 340 to 362 (DGLTPLQLAAKMGKAEILKYILS), and 398 to 420 (TTDNSVLEIIVYNTNIDNRHEML). Residues 431-460 (TKWKKFAKYMFFLSFCFYFFYNITLTLVSY) traverse the membrane as a helical segment. Topologically, residues 461 to 479 (YRPREDEDLPHPLALTHKM) are extracellular. The chain crosses the membrane as a helical span at residues 480–508 (SWLQLLGRMFVLIWATCISVKEGIAIFLL). Over 509 to 519 (RPSDLQSILSD) the chain is Cytoplasmic. A helical transmembrane segment spans residues 520–540 (AWFHFVFFVQAVLVILSVFLY). Residues 541–545 (LFAYK) are Extracellular-facing. Residues 546-566 (EYLACLVLAMALGWANMLYYT) traverse the membrane as a helical segment. The Cytoplasmic segment spans residues 567–569 (RGF). Residues 570 to 608 (QSMGMYSVMIQKVILHDVLKFLFVYILFLLGFGVALASL) form a helical membrane-spanning segment. Over 609–620 (IEKCSKDKKDCS) the chain is Extracellular. Positions 621–646 (SYGSFSDAVLELFKLTIGLGDLNIQQ) form an intramembrane region, pore-forming. Glycine 638 serves as a coordination point for Na(+). Residues 647–649 (NST) lie on the Extracellular side of the membrane. Residues 650 to 686 (YPILFLFLLITYVILTFVLLLNMLIALMGETVENVSK) traverse the membrane as a helical segment. At 687–791 (ESERIWRLQR…ELDEFPETSV (105 aa)) the chain is on the cytoplasmic side.

It belongs to the transient receptor (TC 1.A.4) family. TrpV subfamily. TRPV3 sub-subfamily. As to quaternary structure, homotetramer. May convert from a homotetramer to a homopentamer to allow pore dilation. Interacts with TRPV1; may form a heteromeric channel with TRPV1. Interacts with SNX11; this interaction promotes TRPV3 trafficking from the cell membrane to lysosome for degradation. In terms of tissue distribution, expressed in keratinocytes and hair follicles.

The protein resides in the cell membrane. It is found in the cytoplasm. It localises to the lysosome. It catalyses the reaction Ca(2+)(in) = Ca(2+)(out). It carries out the reaction Mg(2+)(in) = Mg(2+)(out). The catalysed reaction is Na(+)(in) = Na(+)(out). The enzyme catalyses K(+)(in) = K(+)(out). Its activity is regulated as follows. Activated by cannabinoid that binds to the vanilloid binding pocket. Diphenylboronic anhydride induces pore dilation and enhances cation permeability by promoting the conversion to a homopentamer. Functionally, non-selective calcium permeant cation channel. It is activated by innocuous (warm) temperatures and shows an increased response at noxious temperatures greater than 39 degrees Celsius. Activation exhibits an outward rectification. The channel pore can dilate to provide permeability to larger cations. May associate with TRPV1 and may modulate its activity. Is a negative regulator of hair growth and cycling: TRPV3-coupled signaling suppresses keratinocyte proliferation in hair follicles and induces apoptosis and premature hair follicle regression (catagen). This chain is Transient receptor potential cation channel subfamily V member 3 (Trpv3), found in Mus musculus (Mouse).